The chain runs to 255 residues: Taurine import ATP-binding protein TauB (255 aa).

The region spanning 2–229 (LQISHLYADY…RFVAGESSRS (228 aa)) is the ABC transporter domain. 34–41 (GPSGCGKT) is an ATP binding site.

The protein belongs to the ABC transporter superfamily. Taurine importer (TC 3.A.1.17.1) family. The complex is composed of two ATP-binding proteins (TauB), two transmembrane proteins (TauC) and a solute-binding protein (TauA).

The protein localises to the cell inner membrane. The catalysed reaction is taurine(out) + ATP + H2O = taurine(in) + ADP + phosphate + H(+). Functionally, part of the ABC transporter complex TauABC involved in taurine import. Responsible for energy coupling to the transport system. This Shigella flexneri protein is Taurine import ATP-binding protein TauB.